The sequence spans 289 residues: tRNA pseudouridine synthase A (289 aa).

The active-site Nucleophile is D67. Y125 contributes to the substrate binding site.

The protein belongs to the tRNA pseudouridine synthase TruA family. As to quaternary structure, homodimer.

The catalysed reaction is uridine(38/39/40) in tRNA = pseudouridine(38/39/40) in tRNA. In terms of biological role, formation of pseudouridine at positions 38, 39 and 40 in the anticodon stem and loop of transfer RNAs. The sequence is that of tRNA pseudouridine synthase A from Prochlorococcus marinus (strain MIT 9211).